A 496-amino-acid polypeptide reads, in one-letter code: Glycerol kinase (496 aa).

ADP is bound at residue Thr12. Positions 12, 13, and 14 each coordinate ATP. Thr12 contacts sn-glycerol 3-phosphate. Arg16 provides a ligand contact to ADP. Sn-glycerol 3-phosphate is bound by residues Arg82, Glu83, and Tyr134. Glycerol-binding residues include Arg82, Glu83, and Tyr134. Residue His230 is modified to Phosphohistidine; by HPr. Residue Asp244 participates in sn-glycerol 3-phosphate binding. Residues Asp244 and Gln245 each contribute to the glycerol site. The ADP site is built by Thr266 and Gly309. ATP contacts are provided by Thr266, Gly309, Gln313, and Gly410. Residues Gly410 and Asn414 each coordinate ADP.

This sequence belongs to the FGGY kinase family. Homotetramer and homodimer (in equilibrium). In terms of processing, the phosphoenolpyruvate-dependent sugar phosphotransferase system (PTS), including enzyme I, and histidine-containing protein (HPr) are required for the phosphorylation, which leads to the activation of the enzyme.

The catalysed reaction is glycerol + ATP = sn-glycerol 3-phosphate + ADP + H(+). Its pathway is polyol metabolism; glycerol degradation via glycerol kinase pathway; sn-glycerol 3-phosphate from glycerol: step 1/1. Its activity is regulated as follows. Activated by phosphorylation and inhibited by fructose 1,6-bisphosphate (FBP). Functionally, key enzyme in the regulation of glycerol uptake and metabolism. Catalyzes the phosphorylation of glycerol to yield sn-glycerol 3-phosphate. This chain is Glycerol kinase, found in Bacillus cereus (strain Q1).